We begin with the raw amino-acid sequence, 309 residues long: Probable lipid kinase YegS-like (309 aa).

The DAGKc domain occupies 1 to 134 (MAPSHWRLIL…VDLLRIDAEH (134 aa)). ATP contacts are provided by residues threonine 39, 65 to 71 (GDGTLSE), and threonine 96. 3 residues coordinate Mg(2+): valine 219, aspartate 222, and leucine 224. Glutamate 280 acts as the Proton acceptor in catalysis.

Belongs to the diacylglycerol/lipid kinase family. YegS lipid kinase subfamily. Mg(2+) is required as a cofactor. The cofactor is Ca(2+).

Its subcellular location is the cytoplasm. Its function is as follows. Probably phosphorylates lipids; the in vivo substrate is unknown. The chain is Probable lipid kinase YegS-like from Xanthomonas oryzae pv. oryzae (strain MAFF 311018).